Consider the following 411-residue polypeptide: Heterogeneous nuclear ribonucleoprotein 1 (411 aa).

Residues 6-82 (GKLFVGGISW…REVDVKRAMS (77 aa)) form the RRM 1 domain. 3 disordered regions span residues 81–103 (MSRE…SSGG), 183–221 (KRAL…DGRM), and 358–411 (AAYG…RQGQ). Polar residues predominate over residues 87–101 (QVSGRTGNLNTSRSS). The RRM 2 domain maps to 110 to 187 (KKIFVGGLPP…KQVEVKRALP (78 aa)). Gly residues-rich tracts occupy residues 192–212 (PGGG…GYGG), 362–387 (VVGG…GYGD), and 397–411 (GYGG…RQGQ). Residues 341 to 390 (GYGYGGYSGSDSGYGNQAAYGVVGGRPSGGGSNNPGSGGYMGGGYGDGSW) form a nuclear targeting sequence (M9) region.

As to quaternary structure, component of the spliceosome. Interacts with TRN1.

It is found in the nucleus. The protein localises to the cytoplasm. In terms of biological role, involved with pre-mRNA processing. Forms complexes (ribonucleosomes) with at least 20 other different hnRNP and heterogeneous nuclear RNA in the nucleus. Its function is as follows. Involved in the packaging of pre-mRNA into hnRNP particles, transport of poly(A) mRNA from the nucleus to the cytoplasm and may modulate splice site selection. The protein is Heterogeneous nuclear ribonucleoprotein 1 (RNP1) of Arabidopsis thaliana (Mouse-ear cress).